We begin with the raw amino-acid sequence, 361 residues long: Beta-hexosaminidase (361 aa).

Substrate is bound by residues Asp-69, Arg-77, Arg-144, and 174–175 (KH). His-187 (proton donor/acceptor) is an active-site residue. The Nucleophile role is filled by Asp-258.

Belongs to the glycosyl hydrolase 3 family. NagZ subfamily.

The protein resides in the cytoplasm. It carries out the reaction Hydrolysis of terminal non-reducing N-acetyl-D-hexosamine residues in N-acetyl-beta-D-hexosaminides.. The protein operates within cell wall biogenesis; peptidoglycan recycling. Plays a role in peptidoglycan recycling by cleaving the terminal beta-1,4-linked N-acetylglucosamine (GlcNAc) from peptide-linked peptidoglycan fragments, giving rise to free GlcNAc, anhydro-N-acetylmuramic acid and anhydro-N-acetylmuramic acid-linked peptides. This chain is Beta-hexosaminidase, found in Neisseria meningitidis serogroup C / serotype 2a (strain ATCC 700532 / DSM 15464 / FAM18).